A 250-amino-acid polypeptide reads, in one-letter code: MHVPRSILRAGYFSQVKRTCDDVPMAFCSQAQLKGRSTMIKPRAYALLGVFFLYACASTPREEDVPEKFTPADLMLRAQESYDAGNITWARFYYQTVLDRFPNNESAVISAEFELAHILVKQKSWQDAYNRLMYILKKYEAAGSARLPPAYYKLTLIDLSRVKPHLNLETANTKATEYQKNYQEELKQRQELRQKLLQERTQKMLEALHQEETPEQDARDTAKKKTDQEEHTMRKANAPKTKASGEAPTP.

The stretch at 165–208 (HLNLETANTKATEYQKNYQEELKQRQELRQKLLQERTQKMLEAL) forms a coiled coil. Positions 201-233 (TQKMLEALHQEETPEQDARDTAKKKTDQEEHTM) are enriched in basic and acidic residues. The segment at 201–250 (TQKMLEALHQEETPEQDARDTAKKKTDQEEHTMRKANAPKTKASGEAPTP) is disordered.

This is an uncharacterized protein from Treponema pallidum (strain Nichols).